Reading from the N-terminus, the 196-residue chain is Ribosome maturation factor RimP (196 aa).

The segment at 164–196 is disordered; that stretch reads LAPQKPNKPGPKKPGHDKKKPSNEPAAGKPRAE. The span at 173–182 shows a compositional bias: basic residues; the sequence is GPKKPGHDKK.

This sequence belongs to the RimP family.

It localises to the cytoplasm. In terms of biological role, required for maturation of 30S ribosomal subunits. The polypeptide is Ribosome maturation factor RimP (Xanthomonas campestris pv. campestris (strain 8004)).